The primary structure comprises 136 residues: MARTKQTARKSTGGKAPRKQLASKAARKSAPSTGGVKKPHRYKPGTVALREIRRYQKSTELLIRKLPFQRLVREIAQDFKSDLRFQSSAIGALQESVEAYLVSLFEDTNLCAIHAKRVTIQSKDIQLARRLRGERG.

The disordered stretch occupies residues 1-43 (MARTKQTARKSTGGKAPRKQLASKAARKSAPSTGGVKKPHRYK). Lys5 carries the post-translational modification N6,N6,N6-trimethyllysine; alternate. Lys5 bears the N6,N6-dimethyllysine; alternate mark. N6-methyllysine; alternate occurs at positions 5 and 10. Position 10 is an N6-acetyllysine; alternate (Lys10). At Ser11 the chain carries Phosphoserine. Position 15 is an N6,N6-dimethyllysine; alternate (Lys15). Lys15, Lys19, Lys24, Lys28, and Lys37 each carry N6-acetyllysine; alternate. 4 positions are modified to N6-methyllysine; alternate: Lys19, Lys24, Lys28, and Lys37. Lys28 and Lys37 each carry N6,N6,N6-trimethyllysine; alternate. 2 positions are modified to N6,N6-dimethyllysine; alternate: Lys28 and Lys37. Residues Lys57 and Lys65 each carry the N6-acetyllysine modification. N6,N6,N6-trimethyllysine; alternate is present on Lys80. An N6,N6-dimethyllysine; alternate modification is found at Lys80. Position 80 is an N6-methyllysine; alternate (Lys80).

Belongs to the histone H3 family. The nucleosome is a histone octamer containing two molecules each of H2A, H2B, H3 and H4 assembled in one H3-H4 heterotetramer and two H2A-H2B heterodimers. The octamer wraps approximately 147 bp of DNA. Post-translationally, phosphorylated to form H3S10ph. H3S10ph promotes subsequent H3K14ac formation and is required for transcriptional activation through TBP recruitment to the promoters. Mono-, di- and trimethylated by the COMPASS complex to form H3K4me1/2/3. H3K4me activates gene expression by regulating transcription elongation and plays a role in telomere length maintenance. H3K4me enrichment correlates with transcription levels, and occurs in a 5' to 3' gradient with H3K4me3 enrichment at the 5'-end of genes, shifting to H3K4me2 and then H3K4me1. Methylated by SET2 to form H3K36me. H3K36me represses gene expression. Methylated by DOT1 to form H3K79me. H3K79me is required for association of SIR proteins with telomeric regions and for telomeric silencing. The COMPASS-mediated formation of H3K4me2/3 and the DOT1-mediated formation of H3K79me require H2BK123ub1. In terms of processing, acetylation of histone H3 leads to transcriptional activation. H3K14ac formation by GCN5 is promoted by H3S10ph. H3K14ac can also be formed by ESA1. H3K56ac formation occurs predominantly in newly synthesized H3 molecules during G1, S and G2/M of the cell cycle and may be involved in DNA repair.

Its subcellular location is the nucleus. The protein resides in the chromosome. Functionally, core component of nucleosome. Nucleosomes wrap and compact DNA into chromatin, limiting DNA accessibility to the cellular machineries which require DNA as a template. Histones thereby play a central role in transcription regulation, DNA repair, DNA replication and chromosomal stability. DNA accessibility is regulated via a complex set of post-translational modifications of histones, also called histone code, and nucleosome remodeling. In Phaeosphaeria nodorum (strain SN15 / ATCC MYA-4574 / FGSC 10173) (Glume blotch fungus), this protein is Histone H3 (HHT1).